We begin with the raw amino-acid sequence, 472 residues long: ATP synthase subunit beta (472 aa).

Gly-155 to Thr-162 serves as a coordination point for ATP.

Belongs to the ATPase alpha/beta chains family. In terms of assembly, F-type ATPases have 2 components, CF(1) - the catalytic core - and CF(0) - the membrane proton channel. CF(1) has five subunits: alpha(3), beta(3), gamma(1), delta(1), epsilon(1). CF(0) has three main subunits: a(1), b(2) and c(9-12). The alpha and beta chains form an alternating ring which encloses part of the gamma chain. CF(1) is attached to CF(0) by a central stalk formed by the gamma and epsilon chains, while a peripheral stalk is formed by the delta and b chains.

The protein resides in the cell inner membrane. It catalyses the reaction ATP + H2O + 4 H(+)(in) = ADP + phosphate + 5 H(+)(out). Produces ATP from ADP in the presence of a proton gradient across the membrane. The catalytic sites are hosted primarily by the beta subunits. This is ATP synthase subunit beta from Fervidobacterium nodosum (strain ATCC 35602 / DSM 5306 / Rt17-B1).